The sequence spans 156 residues: Deoxyuridine 5'-triphosphate nucleotidohydrolase (156 aa).

Residues 76 to 78 (RSG), Asn89, 93 to 95 (TVD), and Lys103 each bind substrate.

Belongs to the dUTPase family. The cofactor is Mg(2+).

The catalysed reaction is dUTP + H2O = dUMP + diphosphate + H(+). It functions in the pathway pyrimidine metabolism; dUMP biosynthesis; dUMP from dCTP (dUTP route): step 2/2. In terms of biological role, this enzyme is involved in nucleotide metabolism: it produces dUMP, the immediate precursor of thymidine nucleotides and it decreases the intracellular concentration of dUTP so that uracil cannot be incorporated into DNA. This chain is Deoxyuridine 5'-triphosphate nucleotidohydrolase, found in Rhizobium etli (strain CIAT 652).